The primary structure comprises 398 residues: Mu-type opioid receptor (398 aa).

The Extracellular segment spans residues 1–66 (MDSSAGPGNI…CPQTGSPSMV (66 aa)). Residues Asn-9, Asn-31, Asn-38, and Asn-46 are each glycosylated (N-linked (GlcNAc...) asparagine). A helical membrane pass occupies residues 67–91 (TAITIMALYSIVCVVGLFGNFLVMY). Over 92–104 (VIVRYTKMKTATN) the chain is Cytoplasmic. The chain crosses the membrane as a helical span at residues 105–129 (IYIFNLALADALATSTLPFQSVNYL). The Extracellular portion of the chain corresponds to 130-140 (MGTWPFGNILC). Residues Cys-140 and Cys-217 are joined by a disulfide bond. The helical transmembrane segment at 141-163 (KIVISIDYYNMFTSIFTLCTMSV) threads the bilayer. At 164–183 (DRYIAVCHPVKALDFRTPRN) the chain is on the cytoplasmic side. A Phosphotyrosine modification is found at Tyr-166. A helical membrane pass occupies residues 184 to 205 (AKIVNVCNWILSSAIGLPVMFM). The Extracellular segment spans residues 206–228 (ATTKYRQGSIDCTLTFSHPTWYW). Residues 229–253 (ENLLKICVFIFAFIMPVLIITVCYG) form a helical membrane-spanning segment. The Cytoplasmic segment spans residues 254 to 277 (LMILRLKSVRMLSGSKEKDRNLRR). A helical transmembrane segment spans residues 278–304 (ITRMVLVVVAVFIVCWTPIHIYVIIKA). The Extracellular segment spans residues 305–312 (LITIPETT). The chain crosses the membrane as a helical span at residues 313 to 336 (FQTVSWHFCIALGYTNSCLNPVLY). Positions 332–336 (NPVLY) match the NPxxY; plays a role in stabilizing the activated conformation of the receptor motif. At 337–398 (AFLDENFKRC…NLEAETAPLP (62 aa)) the chain is on the cytoplasmic side. The S-palmitoyl cysteine moiety is linked to residue Cys-351. The segment at 362-383 (NSARIRQNTREHPSTANTVDRT) is disordered. Ser-363 is modified (phosphoserine). Position 370 is a phosphothreonine (Thr-370). Ser-375 carries the phosphoserine modification. Phosphothreonine is present on Thr-394.

The protein belongs to the G-protein coupled receptor 1 family. As to quaternary structure, forms homooligomers and heterooligomers with other GPCRs, such as OPRD1, OPRK1, OPRL1, NPFFR2, ADRA2A, SSTR2, CNR1 and CCR5 (probably in dimeric forms). Interacts with heterotrimeric G proteins; interaction with a heterotrimeric complex containing GNAI1, GNB1 and GNG2 stabilizes the active conformation of the receptor and increases its affinity for endomorphin-2, the synthetic opioid peptide DAMGO and for morphinan agonists. Interacts with PPL; the interaction disrupts agonist-mediated G-protein activation. Interacts (via C-terminus) with DNAJB4 (via C-terminus). Interacts with calmodulin; the interaction inhibits the constitutive activity of OPRM1; it abolishes basal and attenuates agonist-stimulated G-protein coupling. Interacts with FLNA, PLD2, RANBP9 and WLS and GPM6A. Interacts with RTP4. Interacts with SYP and GNAS. Interacts with RGS9, RGS17, RGS20, RGS4, PPP1R9B and HINT1. Isoform 9 interacts with GRPR. In terms of processing, phosphorylated. Differentially phosphorylated in basal and agonist-induced conditions. Agonist-mediated phosphorylation modulates receptor internalization. Phosphorylated by GRK2 in a agonist-dependent manner. Phosphorylation at Tyr-166 requires receptor activation, is dependent on non-receptor protein tyrosine kinase Src and results in a decrease in agonist efficacy by reducing G-protein coupling efficiency. Phosphorylated on tyrosine residues; the phosphorylation is involved in agonist-induced G-protein-independent receptor down-regulation. Phosphorylation at Ser-375 is involved in G-protein-dependent but not beta-arrestin-dependent activation of the ERK pathway. Ubiquitinated. A basal ubiquitination seems not to be related to degradation. Ubiquitination is increased upon formation of OPRM1:OPRD1 oligomers leading to proteasomal degradation; the ubiquitination is diminished by RTP4.

It is found in the cell membrane. Its subcellular location is the cell projection. The protein localises to the axon. It localises to the perikaryon. The protein resides in the dendrite. It is found in the endosome. Functionally, receptor for endogenous opioids such as beta-endorphin and endomorphin. Receptor for natural and synthetic opioids including morphine, heroin, DAMGO, fentanyl, etorphine, buprenorphin and methadone. Also activated by enkephalin peptides, such as Met-enkephalin or Met-enkephalin-Arg-Phe, with higher affinity for Met-enkephalin-Arg-Phe. Agonist binding to the receptor induces coupling to an inactive GDP-bound heterotrimeric G-protein complex and subsequent exchange of GDP for GTP in the G-protein alpha subunit leading to dissociation of the G-protein complex with the free GTP-bound G-protein alpha and the G-protein beta-gamma dimer activating downstream cellular effectors. The agonist- and cell type-specific activity is predominantly coupled to pertussis toxin-sensitive G(i) and G(o) G alpha proteins, GNAI1, GNAI2, GNAI3 and GNAO1 isoforms Alpha-1 and Alpha-2, and to a lesser extent to pertussis toxin-insensitive G alpha proteins GNAZ and GNA15. They mediate an array of downstream cellular responses, including inhibition of adenylate cyclase activity and both N-type and L-type calcium channels, activation of inward rectifying potassium channels, mitogen-activated protein kinase (MAPK), phospholipase C (PLC), phosphoinositide/protein kinase (PKC), phosphoinositide 3-kinase (PI3K) and regulation of NF-kappa-B. Also couples to adenylate cyclase stimulatory G alpha proteins. The selective temporal coupling to G-proteins and subsequent signaling can be regulated by RGSZ proteins, such as RGS9, RGS17 and RGS4. Phosphorylation by members of the GPRK subfamily of Ser/Thr protein kinases and association with beta-arrestins is involved in short-term receptor desensitization. Beta-arrestins associate with the GPRK-phosphorylated receptor and uncouple it from the G-protein thus terminating signal transduction. The phosphorylated receptor is internalized through endocytosis via clathrin-coated pits which involves beta-arrestins. The activation of the ERK pathway occurs either in a G-protein-dependent or a beta-arrestin-dependent manner and is regulated by agonist-specific receptor phosphorylation. Acts as a class A G-protein coupled receptor (GPCR) which dissociates from beta-arrestin at or near the plasma membrane and undergoes rapid recycling. Receptor down-regulation pathways are varying with the agonist and occur dependent or independent of G-protein coupling. Endogenous ligands induce rapid desensitization, endocytosis and recycling. Heterooligomerization with other GPCRs can modulate agonist binding, signaling and trafficking properties. Its function is as follows. Isoform 9 is involved in morphine-induced scratching and seems to cross-activate GRPR in response to morphine. In Mus musculus (Mouse), this protein is Mu-type opioid receptor (Oprm1).